Here is a 173-residue protein sequence, read N- to C-terminus: Bifunctional protein PyrR (173 aa).

Residues 93-105 (IILIDDVLYTGRT) carry the PRPP-binding motif.

The protein belongs to the purine/pyrimidine phosphoribosyltransferase family. PyrR subfamily. As to quaternary structure, homodimer and homohexamer; in equilibrium.

It carries out the reaction UMP + diphosphate = 5-phospho-alpha-D-ribose 1-diphosphate + uracil. Regulates transcriptional attenuation of the pyrimidine nucleotide (pyr) operon by binding in a uridine-dependent manner to specific sites on pyr mRNA. This disrupts an antiterminator hairpin in the RNA and favors formation of a downstream transcription terminator, leading to a reduced expression of downstream genes. Functionally, also displays a weak uracil phosphoribosyltransferase activity which is not physiologically significant. This Streptococcus agalactiae serotype Ia (strain ATCC 27591 / A909 / CDC SS700) protein is Bifunctional protein PyrR.